Consider the following 88-residue polypeptide: Small ribosomal subunit protein bS20 (88 aa).

The segment at 1–28 (MANTSSAKKATRKIARRTAVNKSRRTQM) is disordered.

Functionally, binds directly to 16S ribosomal RNA. The sequence is that of Small ribosomal subunit protein bS20 from Rhodopseudomonas palustris (strain ATCC BAA-98 / CGA009).